The primary structure comprises 317 residues: Acetyl-coenzyme A carboxylase carboxyl transferase subunit alpha (317 aa).

Residues 39-293 (RLETKAREAL…GDAIADALSQ (255 aa)) form the CoA carboxyltransferase C-terminal domain.

The protein belongs to the AccA family. As to quaternary structure, acetyl-CoA carboxylase is a heterohexamer composed of biotin carboxyl carrier protein (AccB), biotin carboxylase (AccC) and two subunits each of ACCase subunit alpha (AccA) and ACCase subunit beta (AccD).

Its subcellular location is the cytoplasm. It carries out the reaction N(6)-carboxybiotinyl-L-lysyl-[protein] + acetyl-CoA = N(6)-biotinyl-L-lysyl-[protein] + malonyl-CoA. Its pathway is lipid metabolism; malonyl-CoA biosynthesis; malonyl-CoA from acetyl-CoA: step 1/1. Functionally, component of the acetyl coenzyme A carboxylase (ACC) complex. First, biotin carboxylase catalyzes the carboxylation of biotin on its carrier protein (BCCP) and then the CO(2) group is transferred by the carboxyltransferase to acetyl-CoA to form malonyl-CoA. The sequence is that of Acetyl-coenzyme A carboxylase carboxyl transferase subunit alpha from Xanthobacter autotrophicus (strain ATCC BAA-1158 / Py2).